A 311-amino-acid polypeptide reads, in one-letter code: Heme A synthase (311 aa).

Topologically, residues 1 to 6 (MQRFIK) are cytoplasmic. Residues 7–27 (WLAVITSLDLLIVLLGGALVT) traverse the membrane as a helical segment. Over 28–62 (KTGSGQGCGKSWPLCNGEFVPSNLSMETIIELSHR) the chain is Extracellular. C35 and C42 form a disulfide bridge. The active site involves E58. H61 serves as a coordination point for heme o. A helical transmembrane segment spans residues 63–83 (LTSGSAGILVTLLCILSWKYY). The Cytoplasmic portion of the chain corresponds to 84–91 (KHVRETKT). The helical transmembrane segment at 92–112 (LAILSFVFLVAQALMGAAAVV) threads the bilayer. Over 113–121 (WGQMPAVLA) the chain is Extracellular. A helical membrane pass occupies residues 122–142 (IHFGISLISFASVILLTCLIF). Residue H123 coordinates heme o. The Cytoplasmic portion of the chain corresponds to 143–159 (EIDQKFDARSLIMDKKM). The chain crosses the membrane as a helical span at residues 160-180 (KFHIYGVTIYSYIVVYTGALV). Topologically, residues 181–211 (RHERASLACPDFPLCSKNRPMPTQLHEWVQM) are extracellular. C189 and C195 are oxidised to a cystine. A helical transmembrane segment spans residues 212–232 (GHRVAAMLIFAWILYAMILAI). Residue H213 participates in heme b binding. Residues 233–243 (RHYKQQPVVYW) are Cytoplasmic-facing. A helical transmembrane segment spans residues 244 to 264 (GWIISFILVTLQAIVGILVVF). Over 265–271 (TNASLSM) the chain is Extracellular. A helical membrane pass occupies residues 272–292 (ALLHSLFISCLFAVLCYLVML). A heme b-binding site is contributed by H275. The Cytoplasmic segment spans residues 293–311 (GTRSKVNAKEAASISKQTK).

The protein belongs to the COX15/CtaA family. Type 1 subfamily. Interacts with CtaB. It depends on heme b as a cofactor.

The protein resides in the cell membrane. It carries out the reaction Fe(II)-heme o + 2 A + H2O = Fe(II)-heme a + 2 AH2. It participates in porphyrin-containing compound metabolism; heme A biosynthesis; heme A from heme O: step 1/1. Functionally, catalyzes the conversion of heme O to heme A by two successive hydroxylations of the methyl group at C8. The first hydroxylation forms heme I, the second hydroxylation results in an unstable dihydroxymethyl group, which spontaneously dehydrates, resulting in the formyl group of heme A. The chain is Heme A synthase from Bacillus cereus (strain AH187).